A 443-amino-acid chain; its full sequence is Na(+)-translocating ferredoxin:NAD(+) oxidoreductase complex subunit C (443 aa).

2 consecutive 4Fe-4S ferredoxin-type domains span residues Glu-359–Tyr-391 and Asp-398–Ile-428. [4Fe-4S] cluster contacts are provided by Cys-369, Cys-372, Cys-375, Cys-379, Cys-408, Cys-411, Cys-414, and Cys-418.

This sequence belongs to the 4Fe4S bacterial-type ferredoxin family. RnfC subfamily. In terms of assembly, the complex is composed of six subunits: RnfA, RnfB, RnfC, RnfD, RnfE and RnfG. [4Fe-4S] cluster is required as a cofactor.

It is found in the cell membrane. It catalyses the reaction 2 reduced [2Fe-2S]-[ferredoxin] + Na(+)(in) + NAD(+) + H(+) = 2 oxidized [2Fe-2S]-[ferredoxin] + Na(+)(out) + NADH. Its function is as follows. Part of a membrane-bound complex that couples electron transfer with translocation of ions across the membrane. Couples electron transfer from reduced ferredoxin to NAD(+) with electrogenic movement of Na(+) out of the cell. Involved in caffeate respiration. The protein is Na(+)-translocating ferredoxin:NAD(+) oxidoreductase complex subunit C of Acetobacterium woodii (strain ATCC 29683 / DSM 1030 / JCM 2381 / KCTC 1655 / WB1).